The following is a 444-amino-acid chain: 3-phosphoshikimate 1-carboxyvinyltransferase (444 aa).

Lysine 29, serine 30, and arginine 34 together coordinate 3-phosphoshikimate. Lysine 29 lines the phosphoenolpyruvate pocket. Residues glycine 102 and arginine 131 each contribute to the phosphoenolpyruvate site. Residues serine 176, glutamine 178, aspartate 326, and lysine 353 each coordinate 3-phosphoshikimate. Glutamine 178 provides a ligand contact to phosphoenolpyruvate. Catalysis depends on aspartate 326, which acts as the Proton acceptor. Residues arginine 357 and arginine 399 each contribute to the phosphoenolpyruvate site.

The protein belongs to the EPSP synthase family. In terms of assembly, monomer.

The protein localises to the cytoplasm. The catalysed reaction is 3-phosphoshikimate + phosphoenolpyruvate = 5-O-(1-carboxyvinyl)-3-phosphoshikimate + phosphate. It functions in the pathway metabolic intermediate biosynthesis; chorismate biosynthesis; chorismate from D-erythrose 4-phosphate and phosphoenolpyruvate: step 6/7. Its function is as follows. Catalyzes the transfer of the enolpyruvyl moiety of phosphoenolpyruvate (PEP) to the 5-hydroxyl of shikimate-3-phosphate (S3P) to produce enolpyruvyl shikimate-3-phosphate and inorganic phosphate. This is 3-phosphoshikimate 1-carboxyvinyltransferase from Synechococcus sp. (strain JA-3-3Ab) (Cyanobacteria bacterium Yellowstone A-Prime).